The following is a 251-amino-acid chain: 4-hydroxy-tetrahydrodipicolinate reductase (251 aa).

8 to 13 (GALGRM) contacts NAD(+). Residue R36 participates in NADP(+) binding. NAD(+)-binding positions include 89 to 91 (GTT) and 113 to 116 (TTNF). H145 acts as the Proton donor/acceptor in catalysis. Residue H146 coordinates (S)-2,3,4,5-tetrahydrodipicolinate. The active-site Proton donor is the K149. 155–156 (GT) is a binding site for (S)-2,3,4,5-tetrahydrodipicolinate.

It belongs to the DapB family.

The protein resides in the cytoplasm. It carries out the reaction (S)-2,3,4,5-tetrahydrodipicolinate + NAD(+) + H2O = (2S,4S)-4-hydroxy-2,3,4,5-tetrahydrodipicolinate + NADH + H(+). The catalysed reaction is (S)-2,3,4,5-tetrahydrodipicolinate + NADP(+) + H2O = (2S,4S)-4-hydroxy-2,3,4,5-tetrahydrodipicolinate + NADPH + H(+). It participates in amino-acid biosynthesis; L-lysine biosynthesis via DAP pathway; (S)-tetrahydrodipicolinate from L-aspartate: step 4/4. Its function is as follows. Catalyzes the conversion of 4-hydroxy-tetrahydrodipicolinate (HTPA) to tetrahydrodipicolinate. This is 4-hydroxy-tetrahydrodipicolinate reductase from Methanocorpusculum labreanum (strain ATCC 43576 / DSM 4855 / Z).